Consider the following 116-residue polypeptide: Ly-6/neurotoxin-like protein 1 (116 aa).

Residues 1 to 20 form the signal peptide; it reads MTPLLTLFLVALIGLPLAQA. The UPAR/Ly6 domain occupies 21–105; that stretch reads LDCHVCAYNG…FAAPATLALA (85 aa). Intrachain disulfides connect Cys23–Cys46, Cys26–Cys33, Cys39–Cys64, Cys68–Cys85, and Cys86–Cys91. Asn92 carries the GPI-anchor amidated asparagine lipid modification. A propeptide spans 93-116 (removed in mature form); the sequence is GAGFAAPATLALAPILLATLWGLL.

Interacts with nAChRs containing alpha-4:beta-2 (CHRNA4:CHRNB2) and alpha-7 (CHRNA7) subunits. Interacts with CHRNA4 probably in the endoplasmic reticulum prior to nAChR pentameric assembly. Interacts with KCNA2/Potassium voltage-gated channel subfamily A member 2.

The protein resides in the cell membrane. The protein localises to the cell projection. It is found in the dendrite. It localises to the endoplasmic reticulum. In terms of biological role, acts in different tissues through interaction to nicotinic acetylcholine receptors (nAChRs). The proposed role as modulator of nAChR activity seems to be dependent on the nAChR subtype and stoichiometry, and to involve an effect on nAChR trafficking and its cell surface expression, and on single channel properties of the nAChR inserted in the plasma membrane. Modulates functional properties of nicotinic acetylcholine receptors (nAChRs) to prevent excessive excitation, and hence neurodegeneration. Enhances desensitization by increasing both the rate and extent of desensitization of alpha-4:beta-2-containing nAChRs and slowing recovery from desensitization. Promotes large amplitude ACh-evoked currents through alpha-4:beta-2 nAChRs. Is involved in regulation of the nAChR pentameric assembly in the endoplasmic reticulum. Shifts stoichiometry from high sensitivity alpha-4(2):beta-2(3) to low sensitivity alpha-4(3):beta-2(2) nAChR. In vitro modulates alpha-3:beta-4-containing nAChRs. Reduces cell surface expression of (alpha-3:beta-4)(2):beta-4 and (alpha-3:beta-4)(2):alpha-5 nAChRs suggesting an interaction with nAChR alpha-3(-):(+)beta-4 subunit interfaces and an allosteric mode. Corresponding single channel effects characterized by decreased unitary conductance, altered burst proportions and enhanced desensitization/inactivation seem to depend on nAChR alpha:alpha subunit interfaces and are greater in (alpha-3:beta-2)(2):alpha-3 when compared to (alpha-3:beta-2)(2):alpha-5 nAChRs. Prevents plasticity in the primary visual cortex late in life. The chain is Ly-6/neurotoxin-like protein 1 from Saimiri boliviensis boliviensis (Bolivian squirrel monkey).